A 208-amino-acid chain; its full sequence is Molybdenum cofactor guanylyltransferase (208 aa).

Residues 10 to 12, lysine 23, aspartate 69, and aspartate 103 contribute to the GTP site; that span reads LAG. Position 103 (aspartate 103) interacts with Mg(2+).

Belongs to the MobA family. Monomer. Mg(2+) is required as a cofactor.

The protein localises to the cytoplasm. The catalysed reaction is Mo-molybdopterin + GTP + H(+) = Mo-molybdopterin guanine dinucleotide + diphosphate. Transfers a GMP moiety from GTP to Mo-molybdopterin (Mo-MPT) cofactor (Moco or molybdenum cofactor) to form Mo-molybdopterin guanine dinucleotide (Mo-MGD) cofactor. This Mesorhizobium japonicum (strain LMG 29417 / CECT 9101 / MAFF 303099) (Mesorhizobium loti (strain MAFF 303099)) protein is Molybdenum cofactor guanylyltransferase.